A 264-amino-acid chain; its full sequence is 4-oxalocrotonate decarboxylase (264 aa).

It belongs to the hydratase/decarboxylase family.

The enzyme catalyses (3E)-2-oxohex-3-enedioate + H(+) = 2-oxopent-4-enoate + CO2. Its pathway is xenobiotic degradation; toluene degradation. This chain is 4-oxalocrotonate decarboxylase (xylI), found in Pseudomonas putida (Arthrobacter siderocapsulatus).